The sequence spans 67 residues: Conotoxin Pu5.1 (67 aa).

Residues methionine 1–alanine 22 form the signal peptide. Positions arginine 23 to arginine 51 are excised as a propeptide. Position 63 is a tryptophan amide (tryptophan 63).

This sequence belongs to the conotoxin T superfamily. In terms of processing, contains 2 disulfide bonds that can be either 'C1-C3, C2-C4' or 'C1-C4, C2-C3', since these disulfide connectivities have been observed for conotoxins with cysteine framework V (for examples, see AC P0DQQ7 and AC P81755). As to expression, expressed by the venom duct.

The protein resides in the secreted. The polypeptide is Conotoxin Pu5.1 (Conus pulicarius (Flea-bitten cone)).